A 159-amino-acid polypeptide reads, in one-letter code: Large ribosomal subunit protein uL22 (159 aa).

Belongs to the universal ribosomal protein uL22 family. In terms of assembly, part of the 50S ribosomal subunit.

This protein binds specifically to 23S rRNA. It makes multiple contacts with different domains of the 23S rRNA in the assembled 50S subunit and ribosome. In terms of biological role, the globular domain of the protein is located near the polypeptide exit tunnel on the outside of the subunit, while an extended beta-hairpin is found that lines the wall of the exit tunnel in the center of the 70S ribosome. The sequence is that of Large ribosomal subunit protein uL22 from Ignicoccus hospitalis (strain KIN4/I / DSM 18386 / JCM 14125).